Reading from the N-terminus, the 399-residue chain is Syndecan (399 aa).

The first 28 residues, 1–28 (MKPKQKISVEPLLLVAILIGVLVAATHA), serve as a signal peptide directing secretion. A disordered region spans residues 28-319 (AQDQKSVKPS…TKGIDHRPNG (292 aa)). Over 29 to 340 (QDQKSVKPSA…TSSFFSQPGI (312 aa)) the chain is Extracellular. Residues 36 to 46 (PSAAAPSAAAS) show a composition bias toward low complexity. Residue serine 62 is glycosylated (O-linked (Xyl...) (glycosaminoglycan) serine). The span at 67-77 (GIHEDLEKDPD) shows a compositional bias: basic and acidic residues. Serine 79, serine 81, and serine 110 each carry an O-linked (Xyl...) (glycosaminoglycan) serine glycan. A compositionally biased stretch (polar residues) spans 99–116 (SHNTRISQSSNSGINTAH). Residues 117-172 (TPTQTSSTIPTTSTSTPMPTTTPTATTPASTTTAAATQISSFANSSSTTTTTLAPT) show a composition bias toward low complexity. Asparagine 160 is a glycosylation site (N-linked (GlcNAc...) asparagine). The span at 191–214 (TESSGDGIDADAEDDDEDDGDDKD) shows a compositional bias: acidic residues. Residue serine 194 is glycosylated (O-linked (Xyl...) (glycosaminoglycan) serine). Positions 215-226 (YDYNKELDKEID) are enriched in basic and acidic residues. Residues 253–270 (DEIDVDGGDEDDNGDSDI) are compositionally biased toward acidic residues. Over residues 299-309 (PNTNVNSQPSD) the composition is skewed to polar residues. A helical transmembrane segment spans residues 341 to 365 (LAAVIGGAVVGLLCAILVVMFIVYR). The Cytoplasmic segment spans residues 366–399 (MRKKDEGSYALDEPKRSPANNSYAKNANNREFYA). The segment at 373–399 (SYALDEPKRSPANNSYAKNANNREFYA) is disordered. Over residues 383–399 (PANNSYAKNANNREFYA) the composition is skewed to polar residues.

The protein belongs to the syndecan proteoglycan family. In 13-16 hours embryos, expressed in lymph glands, peripheral and central nervous system and basal surfaces of gut epithelia. Sdc and robo are coexpressed in domains adjacent to slit; in tracheal pits and midline glia cells.

The protein resides in the membrane. Functionally, cell surface proteoglycan that bears heparan sulfate. Required for axonal and myotube guidance, is a necessary component of slit/robo signaling and is required in the slit target cells. The sequence is that of Syndecan (Sdc) from Drosophila melanogaster (Fruit fly).